We begin with the raw amino-acid sequence, 74 residues long: MNANSIFLCFFIMLIGCTLTHSCPSGCYCDQVDGNKCRPEEGTNPHLCLGKYCKTPDSSSVITGNQDEKTQAKG.

Positions 1-22 are cleaved as a signal peptide; sequence MNANSIFLCFFIMLIGCTLTHS.

It belongs to the scoloptoxin-09 family. Contains 3 disulfide bonds. As to expression, expressed by the venom gland.

The protein resides in the secreted. This chain is U-scoloptoxin(09)-Sm3a, found in Scolopendra morsitans (Tanzanian blue ringleg centipede).